Here is a 305-residue protein sequence, read N- to C-terminus: Acetaldehyde dehydrogenase 5 (305 aa).

Position 11-14 (S11–I14) interacts with NAD(+). Catalysis depends on C130, which acts as the Acyl-thioester intermediate. Residues S161–N169 and N272 contribute to the NAD(+) site.

This sequence belongs to the acetaldehyde dehydrogenase family.

The catalysed reaction is acetaldehyde + NAD(+) + CoA = acetyl-CoA + NADH + H(+). The chain is Acetaldehyde dehydrogenase 5 from Dechloromonas aromatica (strain RCB).